Here is a 1361-residue protein sequence, read N- to C-terminus: MTTYSFTEKKRIRKNFSKRPTVLETPYLLSMQIDSYNDFLQQHVPMQSRAKKGLQEAFESIFPIKSHNEMVELQFVGYEFGKPEFDVRECQLRGVTYAAPLRVRMRLAIYDKNSTKKKLKQVVESESVYMGDIPLMTDDGTFVINGTERVIVSQLHRSPGVFFGDDDGQGHSSGKKLYNARIIPYRGSWLDLEFDVKDLIYCRIDRRRKLLITILLRALGLSNQEMLDIFFSKQTFKLNKTGKIELVFEPEQFAGELAQFDIIADGEVIVPMGRKISSRFVRQLIEKKVKKQTVPVDFVVGKFLATDLVDKETGELILAANSELTEELLTRFVELGVKEFQTLLINENGHGGYLADTLRLDETTTELEARAEIYRMMRPGEPPTKEAADSLFEGLFFDEARYDLSRVGRMKFNRSLGREESEGSGILSKEDIIGVVKKLIAIKDGFGSTDDIDHLGNRRIRSVGEMAENAFRIGLVRLERTVKERLAQAESEGLTPKDLINVKPVGAAVKEFFSSSQLSQFMDQNNPLSEVTHKRRISALGPGGLTRERAGFEVRDVHPTHYGRLCPIETPEGPNIGLINSLAVYARTNEYGFLETPYRKVIDGKVTDEIEYLSAIDESKYVIAQANAHLDEHGAFMDGLISTRFENEFTLMPSSRVQYMDVSPRQIVSVAASLIPFLEHDDANRALMGSNMQRQAVPTLRADKPLVGTGMERVVAMDSGVLVKAARGGVIDSVDSSRIVVKVNDDEVQAGGLGVDIYNLTKYTRSNQNTCINQKPLVSPGDIVARGDVLADGPSTDMGELALGQNVLVAFMPWNGYNYEDSILISERVSQEDRFTTIHIEELTCIARDTKLGPEEISSDIPNVKESALAKLDTTGIVYVGAEVKFGDILVGKVTPKGERSQSPEEKLLRAIFGEKASDVKDSSLRVPTGMDGTVVDVRVYTRDGIEKDERAKAIEKMEIDSIAKDIKDQLRIFSADIHDRAARLLLGQAIKKAPKRKSGDTVDQALLDETTPEQWFDFRMQDEAINEKLDAMKQLLEDKHKELQDYYEEKKAKFSQGDDLAPGVLKMVKVYLAVKRRLQPGDKMAGRHGNKGVVSLVVPVEDMPYMEDGTPVDIVLNPLGVPSRMNIGQVLELHLGWAAAGLGKRLAQMMDEGAPIKELRRYLDAVYNHNPACKKEDLDALSDEDFWQLCRNLRQGIPMATPVFDGAEEVEDLQKMLELAELPATGQTHLYDGRTGERFDREVSVGYMYMLKLHHLVDDKMHARSTGPYSLVTQQPLGGRAQFGGQRFGEMEVWALQAYGASYTLQEMLTVKSDDVDGRTKMYKNIVDGNLKIEPGLPESFNVLTKEIRALGIDIGLTQD.

Belongs to the RNA polymerase beta chain family. As to quaternary structure, the RNAP catalytic core consists of 2 alpha, 1 beta, 1 beta' and 1 omega subunit. When a sigma factor is associated with the core the holoenzyme is formed, which can initiate transcription.

It carries out the reaction RNA(n) + a ribonucleoside 5'-triphosphate = RNA(n+1) + diphosphate. In terms of biological role, DNA-dependent RNA polymerase catalyzes the transcription of DNA into RNA using the four ribonucleoside triphosphates as substrates. The sequence is that of DNA-directed RNA polymerase subunit beta from Dichelobacter nodosus (strain VCS1703A).